The sequence spans 283 residues: Nucleotide-binding protein ABBFA_002973 (283 aa).

Residue glycine 9 to serine 16 coordinates ATP. Residue aspartate 59–serine 62 participates in GTP binding.

The protein belongs to the RapZ-like family.

Its function is as follows. Displays ATPase and GTPase activities. This Acinetobacter baumannii (strain AB307-0294) protein is Nucleotide-binding protein ABBFA_002973.